Here is a 76-residue protein sequence, read N- to C-terminus: Acyl carrier protein (76 aa).

The Carrier domain occupies 1–76; sequence MSIEERVKKI…SAIDYVQNNQ (76 aa). O-(pantetheine 4'-phosphoryl)serine is present on Ser-36.

It belongs to the acyl carrier protein (ACP) family. 4'-phosphopantetheine is transferred from CoA to a specific serine of apo-ACP by AcpS. This modification is essential for activity because fatty acids are bound in thioester linkage to the sulfhydryl of the prosthetic group.

It is found in the cytoplasm. It participates in lipid metabolism; fatty acid biosynthesis. Its function is as follows. Carrier of the growing fatty acid chain in fatty acid biosynthesis. The protein is Acyl carrier protein of Histophilus somni (strain 129Pt) (Haemophilus somnus).